Reading from the N-terminus, the 154-residue chain is Interleukin-2 (154 aa).

The N-terminal stretch at 1 to 20 is a signal peptide; it reads MYRMQLLSCIALSLALITNS. Thr-23 carries an O-linked (GalNAc...) threonine glycan. An intrachain disulfide couples Cys-78 to Cys-126.

It belongs to the IL-2 family.

The protein resides in the secreted. Cytokine produced by activated CD4-positive helper T-cells and to a lesser extend activated CD8-positive T-cells and natural killer (NK) cells that plays pivotal roles in the immune response and tolerance. Binds to a receptor complex composed of either the high-affinity trimeric IL-2R (IL2RA/CD25, IL2RB/CD122 and IL2RG/CD132) or the low-affinity dimeric IL-2R (IL2RB and IL2RG). Interaction with the receptor leads to oligomerization and conformation changes in the IL-2R subunits resulting in downstream signaling starting with phosphorylation of JAK1 and JAK3. In turn, JAK1 and JAK3 phosphorylate the receptor to form a docking site leading to the phosphorylation of several substrates including STAT5. This process leads to activation of several pathways including STAT, phosphoinositide-3-kinase/PI3K and mitogen-activated protein kinase/MAPK pathways. Functions as a T-cell growth factor and can increase NK-cell cytolytic activity as well. Promotes strong proliferation of activated B-cells and subsequently immunoglobulin production. Plays a pivotal role in regulating the adaptive immune system by controlling the survival and proliferation of regulatory T-cells, which are required for the maintenance of immune tolerance. Moreover, participates in the differentiation and homeostasis of effector T-cell subsets, including Th1, Th2, Th17 as well as memory CD8-positive T-cells. This is Interleukin-2 (IL2) from Saimiri sciureus (Common squirrel monkey).